A 471-amino-acid chain; its full sequence is Cysteine--tRNA ligase (471 aa).

Zn(2+) is bound at residue Cys-29. The short motif at 31-41 (PTVYNYIHIGN) is the 'HIGH' region element. Zn(2+) is bound by residues Cys-209, His-234, and Glu-238. The 'KMSKS' region signature appears at 266–270 (KMSKS). Position 269 (Lys-269) interacts with ATP.

Belongs to the class-I aminoacyl-tRNA synthetase family. In terms of assembly, monomer. Zn(2+) is required as a cofactor.

The protein localises to the cytoplasm. It catalyses the reaction tRNA(Cys) + L-cysteine + ATP = L-cysteinyl-tRNA(Cys) + AMP + diphosphate. The chain is Cysteine--tRNA ligase from Listeria welshimeri serovar 6b (strain ATCC 35897 / DSM 20650 / CCUG 15529 / CIP 8149 / NCTC 11857 / SLCC 5334 / V8).